The chain runs to 667 residues: Primary amine oxidase (667 aa).

The signal sequence occupies residues 1-18 (KFALFSVLTLLSFHAVFS). N-linked (GlcNAc...) asparagine glycosylation occurs at Asn149. Cys155 and Cys176 are joined by a disulfide. Residues 216-246 (PTAENTEYQVSKQSPPFGPKQHSLTSHQPQG) are disordered. Residues 218–229 (AENTEYQVSKQS) are compositionally biased toward polar residues. N-linked (GlcNAc...) asparagine glycosylation occurs at Asn252. 316 to 327 (FFDSGEFGFGLS) lines the substrate pocket. Asp318 functions as the Proton acceptor in the catalytic mechanism. Cys337 and Cys363 are oxidised to a cystine. Residue Asn382 is glycosylated (N-linked (GlcNAc...) asparagine). Residue 402-407 (VGNYDN) participates in substrate binding. Tyr405 (schiff-base intermediate with substrate; via topaquinone) is an active-site residue. A 2',4',5'-topaquinone modification is found at Tyr405. Cu cation is bound by residues His460 and His462. Residues Asp469, Phe470, and Asp471 each contribute to the Mn(2+) site. A glycan (N-linked (GlcNAc...) asparagine) is linked at Asn576. Residues Asp610 and Ile611 each coordinate Mn(2+). His621 serves as a coordination point for Cu cation.

Belongs to the copper/topaquinone oxidase family. As to quaternary structure, homodimer. The cofactor is Cu cation. Zn(2+) serves as cofactor. Requires L-topaquinone as cofactor. It depends on Mn(2+) as a cofactor. Glycosylated; contains two carbohydrate chains per monomer. In terms of processing, topaquinone (TPQ) is generated by copper-dependent autoxidation of a specific tyrosyl residue.

It carries out the reaction a primary methyl amine + O2 + H2O = an aldehyde + H2O2 + NH4(+). The sequence is that of Primary amine oxidase from Lens culinaris (Lentil).